We begin with the raw amino-acid sequence, 455 residues long: Bifunctional protein GlmU (455 aa).

The pyrophosphorylase stretch occupies residues M1–R226. UDP-N-acetyl-alpha-D-glucosamine contacts are provided by residues L8–G11, K22, Q73, G78–T79, Y99–D101, G136, E151, N166, and N224. D101 contributes to the Mg(2+) binding site. Residue N224 participates in Mg(2+) binding. Positions R227–Q247 are linker. The N-acetyltransferase stretch occupies residues G248–S455. Residues R330 and K348 each contribute to the UDP-N-acetyl-alpha-D-glucosamine site. H360 acts as the Proton acceptor in catalysis. The UDP-N-acetyl-alpha-D-glucosamine site is built by Y363 and N374. Acetyl-CoA is bound by residues A377, N383–Y384, S402, A420, and R437.

It in the N-terminal section; belongs to the N-acetylglucosamine-1-phosphate uridyltransferase family. The protein in the C-terminal section; belongs to the transferase hexapeptide repeat family. As to quaternary structure, homotrimer. Mg(2+) serves as cofactor.

It localises to the cytoplasm. It carries out the reaction alpha-D-glucosamine 1-phosphate + acetyl-CoA = N-acetyl-alpha-D-glucosamine 1-phosphate + CoA + H(+). The enzyme catalyses N-acetyl-alpha-D-glucosamine 1-phosphate + UTP + H(+) = UDP-N-acetyl-alpha-D-glucosamine + diphosphate. The protein operates within nucleotide-sugar biosynthesis; UDP-N-acetyl-alpha-D-glucosamine biosynthesis; N-acetyl-alpha-D-glucosamine 1-phosphate from alpha-D-glucosamine 6-phosphate (route II): step 2/2. It participates in nucleotide-sugar biosynthesis; UDP-N-acetyl-alpha-D-glucosamine biosynthesis; UDP-N-acetyl-alpha-D-glucosamine from N-acetyl-alpha-D-glucosamine 1-phosphate: step 1/1. Its pathway is bacterial outer membrane biogenesis; LPS lipid A biosynthesis. Functionally, catalyzes the last two sequential reactions in the de novo biosynthetic pathway for UDP-N-acetylglucosamine (UDP-GlcNAc). The C-terminal domain catalyzes the transfer of acetyl group from acetyl coenzyme A to glucosamine-1-phosphate (GlcN-1-P) to produce N-acetylglucosamine-1-phosphate (GlcNAc-1-P), which is converted into UDP-GlcNAc by the transfer of uridine 5-monophosphate (from uridine 5-triphosphate), a reaction catalyzed by the N-terminal domain. The sequence is that of Bifunctional protein GlmU from Pseudomonas putida (strain GB-1).